Reading from the N-terminus, the 742-residue chain is Collectin-12 (742 aa).

Over methionine 1–lysine 37 the chain is Cytoplasmic. The chain crosses the membrane as a helical; Signal-anchor for type II membrane protein span at residues phenylalanine 38 to glycine 58. Over tyrosine 59 to leucine 742 the chain is Extracellular. N-linked (GlcNAc...) asparagine glycosylation is present at asparagine 67. A coiled-coil region spans residues glutamate 73–alanine 141. Asparagine 159, asparagine 168, and asparagine 271 each carry an N-linked (GlcNAc...) asparagine glycan. Residues glutamine 215–lysine 328 adopt a coiled-coil conformation. Residues threonine 439–proline 608 are disordered. 3 consecutive Collagen-like domains span residues glycine 443 to lysine 472, glycine 473 to proline 529, and glycine 530 to valine 589. Composition is skewed to low complexity over residues lysine 502–aspartate 525 and lysine 534–proline 556. Positions proline 571–proline 585 are enriched in pro residues. Cystine bridges form between cysteine 607–cysteine 618, cysteine 635–cysteine 730, and cysteine 708–cysteine 722. A C-type lectin domain is found at phenylalanine 614–glutamate 731. Ca(2+)-binding residues include phenylalanine 644, asparagine 646, glutamate 650, aspartate 670, and glutamate 674. Lysine 691, glutamine 694, and aspartate 696 together coordinate a carbohydrate. Residues glutamine 694, aspartate 696, asparagine 697, glutamate 706, aspartate 707, asparagine 718, aspartate 719, and glutamate 731 each coordinate Ca(2+). Glutamate 706 contacts a carbohydrate. 2 residues coordinate a carbohydrate: asparagine 718 and aspartate 719.

As to quaternary structure, the extracellular domain forms a stable trimer. The extracellular domain interacts with fibrillar amyloid-beta peptide. Expressed in perivascular macrophages. Expressed in plaques-surrounding reactive astrocytes and in perivascular astrocytes associated with cerebral amyloid angiopathy (CAA) in the temporal cortex of Alzheimer patient (at protein level). Strongly expressed in placenta. Moderately expressed in heart, skeletal muscle, small intestine and lung. Weakly expressed in brain, colon, thymus and kidney. Expressed in nurse-like cells. Expressed in reactive astrocytes and vascular/perivascular cells in the brain of Alzheimer patient.

The protein resides in the membrane. Functionally, scavenger receptor that displays several functions associated with host defense. Promotes binding and phagocytosis of Gram-positive, Gram-negative bacteria and yeast. Mediates the recognition, internalization and degradation of oxidatively modified low density lipoprotein (oxLDL) by vascular endothelial cells. Binds to several carbohydrates including Gal-type ligands, D-galactose, L- and D-fucose, GalNAc, T and Tn antigens in a calcium-dependent manner and internalizes specifically GalNAc in nurse-like cells. Also binds to sialyl Lewis X or a trisaccharide and asialo-orosomucoid (ASOR). May also play a role in the clearance of amyloid-beta in Alzheimer disease. The chain is Collectin-12 (COLEC12) from Homo sapiens (Human).